A 299-amino-acid polypeptide reads, in one-letter code: ATP phosphoribosyltransferase (299 aa).

Belongs to the ATP phosphoribosyltransferase family. Long subfamily. In terms of assembly, equilibrium between an active dimeric form, an inactive hexameric form and higher aggregates. Interconversion between the various forms is largely reversible and is influenced by the natural substrates and inhibitors of the enzyme. It depends on Mg(2+) as a cofactor.

It is found in the cytoplasm. The catalysed reaction is 1-(5-phospho-beta-D-ribosyl)-ATP + diphosphate = 5-phospho-alpha-D-ribose 1-diphosphate + ATP. The protein operates within amino-acid biosynthesis; L-histidine biosynthesis; L-histidine from 5-phospho-alpha-D-ribose 1-diphosphate: step 1/9. With respect to regulation, feedback inhibited by histidine. Catalyzes the condensation of ATP and 5-phosphoribose 1-diphosphate to form N'-(5'-phosphoribosyl)-ATP (PR-ATP). Has a crucial role in the pathway because the rate of histidine biosynthesis seems to be controlled primarily by regulation of HisG enzymatic activity. The polypeptide is ATP phosphoribosyltransferase (Salmonella enteritidis PT4 (strain P125109)).